The following is a 296-amino-acid chain: CTD kinase subunit gamma (296 aa).

The tract at residues 25–44 (RDSITSSSTTTPPSSQQKLN) is disordered. Over residues 29–39 (TSSSTTTPPSS) the composition is skewed to low complexity. Residue T35 is modified to Phosphothreonine.

This sequence belongs to the CTK3 family. As to quaternary structure, CTDK-I consists of three subunits, CTK1, CTK2 and CTK3 (also called alpha, beta and gamma). Interacts with CTK1. Heterodimerization with CTK2 is required to protect this subunit from degradation. Post-translationally, ubiquitinated. Ubiquitination leads to degradation by the 26S proteasome pathway.

The protein resides in the nucleus. The protein localises to the nucleolus. It localises to the cytoplasm. In terms of biological role, gamma subunit of the CTDK-I complex, which hyperphosphorylates the C-terminal heptapeptide repeat domain (CTD) of the largest RNA polymerase II subunit. CTDK-I phosphorylates 'Ser-5' if the CTD substrate is not phosphorylated at 'Ser-5', but will phosphorylate 'Ser-2' of a CTD substrate if 'Ser-5' is already phosphorylated. CTDK-I is also more reactive toward substrates that are prephosphorylated at 'Ser-2' or 'Ser-5' compared with an unphosphorylated CTD substrate, therefore efficiently creating doubly phosphorylated CTD repeats. Involved in RNA polymerase I transcription and RNA polymerase II transcriptional elongation, and as part of the CTDK-I complex, pre-mRNA 3'-end processing and SET2 mediated H3K36 methylation. Together with CTK2, required for CTK1 CTD kinase activation. Required for DNA damage induced transcription. Involved in the adaptation to alternative carbon sources, including galactose, glycerol and ethanol, but not raffinose. Required for the integrity of the rDNA locus. The polypeptide is CTD kinase subunit gamma (CTK3) (Saccharomyces cerevisiae (strain ATCC 204508 / S288c) (Baker's yeast)).